A 90-amino-acid polypeptide reads, in one-letter code: Small ribosomal subunit protein bS20 (90 aa).

It belongs to the bacterial ribosomal protein bS20 family.

In terms of biological role, binds directly to 16S ribosomal RNA. This chain is Small ribosomal subunit protein bS20, found in Rickettsia canadensis (strain McKiel).